Consider the following 932-residue polypeptide: GPI ethanolamine phosphate transferase 1 (932 aa).

Residues 1-8 (MISLNKKL) lie on the Cytoplasmic side of the membrane. A helical transmembrane segment spans residues 9–29 (VLLVGVIFHVAFMWSIFDIYF). The Lumenal portion of the chain corresponds to 30 to 456 (VSPLIHGMKH…TYNWLFLRTL (427 aa)). N-linked (GlcNAc...) asparagine glycans are attached at residues Asn-138, Asn-202, and Asn-360. Residues 457-477 (VTIGFFGWIAVAFCSYLLAFV) traverse the membrane as a helical segment. Residues 478–486 (VQSDKPFTT) are Cytoplasmic-facing. Residues 487–507 (SLPLKGVAYVALAILSGFFVF) traverse the membrane as a helical segment. At 508–509 (QK) the chain is on the lumenal side. The chain crosses the membrane as a helical span at residues 510 to 530 (SPLHYHLYAVFPVVFWEAVLQ). At 531–551 (RRTAVAEGISILARRSTSKAP) the chain is on the cytoplasmic side. The helical transmembrane segment at 552 to 572 (ALAAILDIGLSLVLLEAIVYG) threads the bilayer. Over 573–577 (YFHRE) the chain is Lumenal. The chain crosses the membrane as a helical span at residues 578 to 598 (IFSVCFGLATLWPFVHNFTVA). Over 599-603 (KREWP) the chain is Cytoplasmic. The chain crosses the membrane as a helical span at residues 604–624 (TTLAWVVMCAIMSSFTLLEVV). Topologically, residues 625 to 627 (KVE) are lumenal. A helical membrane pass occupies residues 628–648 (SIEQILLSGALMLVIGLVFTI). Residues 649–653 (HLQRK) are Cytoplasmic-facing. The helical transmembrane segment at 654–674 (LALAASTVCVLFAQILLVVAT) threads the bilayer. Residues 675–696 (MYFTRESVESLTARNGLPLFSQ) lie on the Lumenal side of the membrane. A helical membrane pass occupies residues 697 to 717 (VGGWISLLLSLAVPFLHFLGS). Residues 718–737 (DAKDYRLRLLIIFLAFGPTF) are Cytoplasmic-facing. A helical transmembrane segment spans residues 738-758 (VILTISWEGFFYVCFFAILVI). The Lumenal portion of the chain corresponds to 759–786 (WIELETQMRDARVTPQTRADLTPGDFRM). A helical membrane pass occupies residues 787-807 (ALFTFFMSQIGFFGIGNIASI). The Cytoplasmic segment spans residues 808-828 (SSFSLDSVYRLIPVFDPFSMG). Residues 829–849 (ALLMFKILVPFAVLSACLGIL) form a helical membrane-spanning segment. The Lumenal portion of the chain corresponds to 850–859 (NLKLGVPPSA). A helical transmembrane segment spans residues 860 to 880 (LFSMVLCVSDILTLNFFYLVV). At 881-900 (DEGSWLDIGTGISHYCIASG) the chain is on the cytoplasmic side. Residues 901–921 (LSLFMMVLEYLSGVLVAGVTI) traverse the membrane as a helical segment. Residues 922–932 (APHVSKIKKDM) are Lumenal-facing.

This sequence belongs to the PIGG/PIGN/PIGO family. PIGN subfamily.

Its subcellular location is the endoplasmic reticulum membrane. It functions in the pathway glycolipid biosynthesis; glycosylphosphatidylinositol-anchor biosynthesis. Its function is as follows. Ethanolamine phosphate transferase involved in glycosylphosphatidylinositol-anchor biosynthesis. Transfers ethanolamine phosphate to the first alpha-1,4-linked mannose of the glycosylphosphatidylinositol precursor of GPI-anchor. In Yarrowia lipolytica (strain CLIB 122 / E 150) (Yeast), this protein is GPI ethanolamine phosphate transferase 1 (MCD4).